We begin with the raw amino-acid sequence, 430 residues long: UDP-N-acetylglucosamine 1-carboxyvinyltransferase (430 aa).

Phosphoenolpyruvate is bound at residue 22 to 23 (KN). Arg102 provides a ligand contact to UDP-N-acetyl-alpha-D-glucosamine. Residue Cys126 is the Proton donor of the active site. At Cys126 the chain carries 2-(S-cysteinyl)pyruvic acid O-phosphothioketal. UDP-N-acetyl-alpha-D-glucosamine is bound by residues 131 to 135 (RPVDL), 172 to 175 (KVSV), Asp317, and Ile339.

It belongs to the EPSP synthase family. MurA subfamily.

The protein localises to the cytoplasm. The catalysed reaction is phosphoenolpyruvate + UDP-N-acetyl-alpha-D-glucosamine = UDP-N-acetyl-3-O-(1-carboxyvinyl)-alpha-D-glucosamine + phosphate. It functions in the pathway cell wall biogenesis; peptidoglycan biosynthesis. Cell wall formation. Adds enolpyruvyl to UDP-N-acetylglucosamine. This is UDP-N-acetylglucosamine 1-carboxyvinyltransferase from Rhizobium johnstonii (strain DSM 114642 / LMG 32736 / 3841) (Rhizobium leguminosarum bv. viciae).